A 71-amino-acid polypeptide reads, in one-letter code: Protein MMP24OS (71 aa).

Residues 1–10 (MGAQLSGGRG) are compositionally biased toward gly residues. The tract at residues 1–61 (MGAQLSGGRG…PSPWGPLDDV (61 aa)) is disordered. Positions 36–55 (HPPQPQPQPQPQPQPEPSPW) are enriched in pro residues.

This Homo sapiens (Human) protein is Protein MMP24OS.